The sequence spans 186 residues: ATP synthase subunit delta (186 aa).

It belongs to the ATPase delta chain family. In terms of assembly, F-type ATPases have 2 components, F(1) - the catalytic core - and F(0) - the membrane proton channel. F(1) has five subunits: alpha(3), beta(3), gamma(1), delta(1), epsilon(1). F(0) has three main subunits: a(1), b(2) and c(10-14). The alpha and beta chains form an alternating ring which encloses part of the gamma chain. F(1) is attached to F(0) by a central stalk formed by the gamma and epsilon chains, while a peripheral stalk is formed by the delta and b chains.

It is found in the cell inner membrane. Its function is as follows. F(1)F(0) ATP synthase produces ATP from ADP in the presence of a proton or sodium gradient. F-type ATPases consist of two structural domains, F(1) containing the extramembraneous catalytic core and F(0) containing the membrane proton channel, linked together by a central stalk and a peripheral stalk. During catalysis, ATP synthesis in the catalytic domain of F(1) is coupled via a rotary mechanism of the central stalk subunits to proton translocation. Functionally, this protein is part of the stalk that links CF(0) to CF(1). It either transmits conformational changes from CF(0) to CF(1) or is implicated in proton conduction. This Fuscovulum blasticum (Rhodobacter blasticus) protein is ATP synthase subunit delta.